A 235-amino-acid polypeptide reads, in one-letter code: Leucyl/phenylalanyl-tRNA--protein transferase (235 aa).

This sequence belongs to the L/F-transferase family.

It localises to the cytoplasm. It catalyses the reaction N-terminal L-lysyl-[protein] + L-leucyl-tRNA(Leu) = N-terminal L-leucyl-L-lysyl-[protein] + tRNA(Leu) + H(+). The enzyme catalyses N-terminal L-arginyl-[protein] + L-leucyl-tRNA(Leu) = N-terminal L-leucyl-L-arginyl-[protein] + tRNA(Leu) + H(+). It carries out the reaction L-phenylalanyl-tRNA(Phe) + an N-terminal L-alpha-aminoacyl-[protein] = an N-terminal L-phenylalanyl-L-alpha-aminoacyl-[protein] + tRNA(Phe). In terms of biological role, functions in the N-end rule pathway of protein degradation where it conjugates Leu, Phe and, less efficiently, Met from aminoacyl-tRNAs to the N-termini of proteins containing an N-terminal arginine or lysine. The protein is Leucyl/phenylalanyl-tRNA--protein transferase of Anaeromyxobacter sp. (strain Fw109-5).